Reading from the N-terminus, the 170-residue chain is Vimentin A1 (170 aa).

Over residues 1-10 (DLTEAANKSN) the composition is skewed to polar residues. Positions 1-20 (DLTEAANKSNEALRLAKQES) are disordered. The interval 1–111 (DLTEAANKSN…ATYRKLLEGE (111 aa)) is coil 2. Positions 1–115 (DLTEAANKSN…KLLEGEESRI (115 aa)) constitute an IF rod domain. The interval 112 to 170 (ESRISTPLPNFSSFNLRETMLELKPNIESTFTKKVLIKTIETRDGQVLNESTQNHDDLE) is tail.

This sequence belongs to the intermediate filament family. As to quaternary structure, homomer. One of the most prominent phosphoproteins in various cells of mesenchymal origin. Phosphorylation is enhanced during cell division, at which time vimentin filaments are significantly reorganized. In terms of tissue distribution, expressed in low amounts in retina, optic nerve, and brain and in higher amounts in spinal cord.

Functionally, vimentins are class-III intermediate filaments found in various non-epithelial cells, especially mesenchymal cells. Vimentin is attached to the nucleus, endoplasmic reticulum, and mitochondria, either laterally or terminally. The polypeptide is Vimentin A1 (Carassius auratus (Goldfish)).